The following is a 218-amino-acid chain: Octanoyltransferase (218 aa).

Positions 30 to 212 (ENTADEIWLV…HFYNILGYNA (183 aa)) constitute a BPL/LPL catalytic domain. Residues 69 to 76 (RGGQITYH), 141 to 143 (SLG), and 154 to 156 (GLA) contribute to the substrate site. Catalysis depends on Cys-172, which acts as the Acyl-thioester intermediate.

This sequence belongs to the LipB family.

Its subcellular location is the cytoplasm. It carries out the reaction octanoyl-[ACP] + L-lysyl-[protein] = N(6)-octanoyl-L-lysyl-[protein] + holo-[ACP] + H(+). Its pathway is protein modification; protein lipoylation via endogenous pathway; protein N(6)-(lipoyl)lysine from octanoyl-[acyl-carrier-protein]: step 1/2. Its function is as follows. Catalyzes the transfer of endogenously produced octanoic acid from octanoyl-acyl-carrier-protein onto the lipoyl domains of lipoate-dependent enzymes. Lipoyl-ACP can also act as a substrate although octanoyl-ACP is likely to be the physiological substrate. The protein is Octanoyltransferase of Actinobacillus pleuropneumoniae serotype 5b (strain L20).